Reading from the N-terminus, the 263-residue chain is L-erythrulose-1-phosphate isomerase (263 aa).

His106 functions as the Electrophile in the catalytic mechanism. Glu178 acts as the Proton acceptor in catalysis.

Belongs to the triosephosphate isomerase family.

It carries out the reaction L-erythrulose 1-phosphate = D-erythrulose 4-phosphate. The protein operates within carbohydrate metabolism; L-threitol degradation. Functionally, catalyzes the isomerization of L-erythrulose-1P to D-erythrulose-4P. Involved in the degradation pathway of L-threitol, that allows M.smegmatis to grow on this compound as the sole carbon source. This chain is L-erythrulose-1-phosphate isomerase, found in Mycolicibacterium smegmatis (strain ATCC 700084 / mc(2)155) (Mycobacterium smegmatis).